Reading from the N-terminus, the 507-residue chain is MNNFPWITSIVMLPILAGLLIPFIPDENGKNVRWYALGIGLLDFLLISYIFGYKYNIQDTSLQLIDDYEWISSINFHWRLGIDGLSIPLILLTGFITTLAMLGAWPIQKNAKLFYFLMLAMYSGQLGVFASQDLLLFFLMWELELIPIYILLIIWGGKKRLYAATKFILYTALGSIFILIAAFGMAFYGENMSFDMQILGEKEYPINLEILFYICFLIAYAVKLPAFPVHTWLPDTHGEAHYSTCMLLAGILLKMGGYALIRINMNMLPNAHIYFAPYLAIIGVINIIYAALTSFAQRNIKRKIAYSSISHMGFVLIGISSFTDIGLSGAMLQMVSHGLIGASLFFLAGTTYDRTRTLILEDMGGIAKYMPKIFAMFTTCSLASLALPGMSGFVAELMVFLGFANSNAYSIEFRGIITFLEAIGIIVTPIYLLSMLRQVFYGSENLKLLKVNNLIDASAREIFIISCLLVPVIGIGIYPRILTQIYDLKTNAIIEHLEIIRSNSQIM.

14 helical membrane-spanning segments follow: residues 4–24 (FPWI…IPFI), 34–54 (WYAL…FGYK), 87–107 (IPLI…AWPI), 111–131 (AKLF…VFAS), 134–154 (LLLF…LLII), 167–187 (FILY…GMAF), 210–230 (ILFY…FPVH), 241–261 (HYST…YALI), 273–293 (IYFA…AALT), 312–332 (MGFV…GAML), 333–353 (QMVS…TTYD), 383–403 (ASLA…FLGF), 416–436 (IITF…LSML), and 462–482 (IFII…PRIL).

This sequence belongs to the complex I subunit 4 family.

It is found in the plastid. The protein resides in the chloroplast thylakoid membrane. It carries out the reaction a plastoquinone + NADH + (n+1) H(+)(in) = a plastoquinol + NAD(+) + n H(+)(out). The enzyme catalyses a plastoquinone + NADPH + (n+1) H(+)(in) = a plastoquinol + NADP(+) + n H(+)(out). This is NAD(P)H-quinone oxidoreductase chain 4, chloroplastic (ndhD) from Mesostigma viride (Green alga).